The primary structure comprises 92 residues: Acylphosphatase (92 aa).

In terms of domain architecture, Acylphosphatase-like spans 7 to 92 (KTRCTISGRV…DPAPAEFSVG (86 aa)). Residues arginine 22 and asparagine 40 contribute to the active site.

The protein belongs to the acylphosphatase family.

The enzyme catalyses an acyl phosphate + H2O = a carboxylate + phosphate + H(+). This chain is Acylphosphatase (acyP), found in Halorhodospira halophila (strain DSM 244 / SL1) (Ectothiorhodospira halophila (strain DSM 244 / SL1)).